The sequence spans 226 residues: ATP synthase subunit a (226 aa).

6 helical membrane passes run 18–38, 79–99, 105–125, 134–154, 179–199, and 201–221; these read FITG…SLGA, LAGT…IPGF, SWSF…FEGI, FAHF…IEII, LIML…VLFF, and GILQ…GAVL.

It belongs to the ATPase A chain family. F-type ATPases have 2 components, CF(1) - the catalytic core - and CF(0) - the membrane proton channel. CF(1) has five subunits: alpha(3), beta(3), gamma(1), delta(1), epsilon(1). CF(0) has three main subunits: a(1), b(2) and c(9-12). The alpha and beta chains form an alternating ring which encloses part of the gamma chain. CF(1) is attached to CF(0) by a central stalk formed by the gamma and epsilon chains, while a peripheral stalk is formed by the delta and b chains.

It is found in the cell inner membrane. In terms of biological role, key component of the proton channel; it plays a direct role in the translocation of protons across the membrane. The protein is ATP synthase subunit a of Helicobacter pylori (strain HPAG1).